The following is a 529-amino-acid chain: Bifunctional purine biosynthesis protein PurH (529 aa).

Residues 1–148 (MQQRRPVRRA…KNHKDVAIVV (148 aa)) enclose the MGS-like domain.

Belongs to the PurH family.

It catalyses the reaction (6R)-10-formyltetrahydrofolate + 5-amino-1-(5-phospho-beta-D-ribosyl)imidazole-4-carboxamide = 5-formamido-1-(5-phospho-D-ribosyl)imidazole-4-carboxamide + (6S)-5,6,7,8-tetrahydrofolate. It carries out the reaction IMP + H2O = 5-formamido-1-(5-phospho-D-ribosyl)imidazole-4-carboxamide. It participates in purine metabolism; IMP biosynthesis via de novo pathway; 5-formamido-1-(5-phospho-D-ribosyl)imidazole-4-carboxamide from 5-amino-1-(5-phospho-D-ribosyl)imidazole-4-carboxamide (10-formyl THF route): step 1/1. Its pathway is purine metabolism; IMP biosynthesis via de novo pathway; IMP from 5-formamido-1-(5-phospho-D-ribosyl)imidazole-4-carboxamide: step 1/1. In Salmonella paratyphi B (strain ATCC BAA-1250 / SPB7), this protein is Bifunctional purine biosynthesis protein PurH.